The sequence spans 68 residues: Glucagon-1 (68 aa).

The protein belongs to the glucagon family.

The protein resides in the secreted. Promotes hydrolysis of glycogen and lipids, and raises the blood sugar level. This Oncorhynchus kisutch (Coho salmon) protein is Glucagon-1 (gcg).